The sequence spans 459 residues: Nuclear distribution protein nudF 1 (459 aa).

Positions 9 to 41 (QAEELHKSIIAYLSANNLSNAASALRGELGLSE) constitute a LisH domain. Positions 61 to 88 (TSIVRLQKKIMDLEARCGALQTELNNAT) form a coiled coil. WD repeat units lie at residues 114–155 (SHRN…TTLK), 157–197 (HTRA…KNIR), 201–240 (GHEH…CVKT), 243–282 (GHSG…NPEA), 288–349 (GHDH…LMTL), 351–390 (GHDN…KCVK), 395–440 (AHGR…PQVQ), and 442–459 (RCVV…IFAN).

Belongs to the WD repeat LIS1/nudF family. Self-associates. Interacts with nudE and dynein.

It localises to the cytoplasm. Its subcellular location is the cytoskeleton. The protein resides in the spindle pole. Functionally, positively regulates the activity of the minus-end directed microtubule motor protein dynein. May enhance dynein-mediated microtubule sliding by targeting dynein to the microtubule plus end. Required for nuclear migration during vegetative growth as well as development. Required for retrograde early endosome (EE) transport from the hyphal tip. Required for localization of dynein to the mitotic spindle poles. Recruits additional proteins to the dynein complex at SPBs. The sequence is that of Nuclear distribution protein nudF 1 from Talaromyces marneffei (strain ATCC 18224 / CBS 334.59 / QM 7333) (Penicillium marneffei).